The chain runs to 780 residues: ATP-dependent 6-phosphofructokinase, liver type (780 aa).

N-acetylalanine is present on A2. Residues 2-390 (ASVDLEKLRT…NWNIYKLLSH (389 aa)) are N-terminal catalytic PFK domain 1. ATP contacts are provided by residues G25, 88–89 (RC), and 118–121 (GDGS). D119 contacts Mg(2+). Residues 164–166 (SID), R201, 208–210 (MGR), E264, R292, and 298–301 (HVQR) each bind substrate. The active-site Proton acceptor is the D166. S377 is modified (phosphoserine). Residues 391 to 400 (QKISKEKTNF) are interdomain linker. Residues 401–780 (SLAILNVGAP…RRTLSIETGF (380 aa)) form a C-terminal regulatory PFK domain 2 region. Beta-D-fructose 2,6-bisphosphate contacts are provided by residues R470, 527 to 531 (TISNN), R565, 572 to 574 (MGG), and E628. Residue S529 is glycosylated (O-linked (GlcNAc) serine). Phosphotyrosine is present on Y640. Beta-D-fructose 2,6-bisphosphate is bound by residues R654, 660-663 (HLQQ), and R734. S775 is subject to Phosphoserine.

The protein belongs to the phosphofructokinase type A (PFKA) family. ATP-dependent PFK group I subfamily. Eukaryotic two domain clade 'E' sub-subfamily. Homo- and heterotetramers. Phosphofructokinase (PFK) enzyme functions as a tetramer composed of different combinations of 3 types of subunits, called PFKM (M), PFKL (L) and PFKP (P). The composition of the PFK tetramer differs according to the tissue type it is present in. The kinetic and regulatory properties of the tetrameric enzyme are dependent on the subunit composition, hence can vary across tissues. The cofactor is Mg(2+). In terms of processing, glcNAcylation at Ser-529 by OGT decreases enzyme activity, leading to redirect glucose flux through the oxidative pentose phosphate pathway. Glycosylation is stimulated by both hypoxia and glucose deprivation.

The protein localises to the cytoplasm. The catalysed reaction is beta-D-fructose 6-phosphate + ATP = beta-D-fructose 1,6-bisphosphate + ADP + H(+). It participates in carbohydrate degradation; glycolysis; D-glyceraldehyde 3-phosphate and glycerone phosphate from D-glucose: step 3/4. Its activity is regulated as follows. Allosterically activated by ADP, AMP, or fructose 2,6-bisphosphate, and allosterically inhibited by ATP or citrate. GlcNAcylation by OGT overcomes allosteric regulation. Catalyzes the phosphorylation of D-fructose 6-phosphate to fructose 1,6-bisphosphate by ATP, the first committing step of glycolysis. Negatively regulates the phagocyte oxidative burst in response to bacterial infection by controlling cellular NADPH biosynthesis and NADPH oxidase-derived reactive oxygen species. Upon macrophage activation, drives the metabolic switch toward glycolysis, thus preventing glucose turnover that produces NADPH via pentose phosphate pathway. In Bos taurus (Bovine), this protein is ATP-dependent 6-phosphofructokinase, liver type (PFKL).